The following is a 385-amino-acid chain: Probable splicing factor YJU2B (385 aa).

The interval 1–26 (MGERKGQNKYYPPDFNPEKHGSLNRY) is disordered. Residue Ser40 is modified to Phosphoserine. Positions 182-215 (LNSMLRRHFREKKKAMQEEEEKDQALQAKANLAI) form a coiled coil. A disordered region spans residues 256–385 (FPSAQGPSTS…VADYSDSESE (130 aa)). A compositionally biased stretch (polar residues) spans 260–270 (QGPSTSSSKAS). A Phosphoserine modification is found at Ser306. 2 stretches are compositionally biased toward polar residues: residues 307-316 (PQCTADNSLS) and 359-373 (GSSQEDLLHPNTPNA).

The protein belongs to the CWC16 family.

It is found in the nucleus. Functionally, may be involved in mRNA splicing. This chain is Probable splicing factor YJU2B, found in Rattus norvegicus (Rat).